We begin with the raw amino-acid sequence, 394 residues long: Methane monooxygenase component A beta chain (394 aa).

As to quaternary structure, m.trichosporium has two forms of methane monooxygenase, a soluble and a membrane-bound type. The soluble type consists of four components (A to D): protein A, comprising three chains, in an alpha-2, beta-2, gamma-2 configuration, is a nonheme iron protein containing an unusual mu-hydroxo bridge structure at its active site and interacts with both oxygen and methane.

It carries out the reaction methane + NADH + O2 + H(+) = methanol + NAD(+) + H2O. The enzyme catalyses methane + NADPH + O2 + H(+) = methanol + NADP(+) + H2O. In terms of biological role, responsible for the initial oxygenation of methane to methanol in methanotrophs. It also catalyzes the monohydroxylation of a variety of unactivated alkenes, alicyclic, aromatic and heterocyclic compounds. The protein is Methane monooxygenase component A beta chain (mmoY) of Methylosinus trichosporium.